The sequence spans 509 residues: ATP synthase subunit alpha (509 aa).

169-176 (GDRQTGKT) serves as a coordination point for ATP.

It belongs to the ATPase alpha/beta chains family. In terms of assembly, F-type ATPases have 2 components, CF(1) - the catalytic core - and CF(0) - the membrane proton channel. CF(1) has five subunits: alpha(3), beta(3), gamma(1), delta(1), epsilon(1). CF(0) has three main subunits: a(1), b(2) and c(9-12). The alpha and beta chains form an alternating ring which encloses part of the gamma chain. CF(1) is attached to CF(0) by a central stalk formed by the gamma and epsilon chains, while a peripheral stalk is formed by the delta and b chains.

It localises to the cell inner membrane. It catalyses the reaction ATP + H2O + 4 H(+)(in) = ADP + phosphate + 5 H(+)(out). Produces ATP from ADP in the presence of a proton gradient across the membrane. The alpha chain is a regulatory subunit. The chain is ATP synthase subunit alpha from Mesorhizobium japonicum (strain LMG 29417 / CECT 9101 / MAFF 303099) (Mesorhizobium loti (strain MAFF 303099)).